Reading from the N-terminus, the 431-residue chain is Nuclear receptor subfamily 1 group I member 2 (431 aa).

2 consecutive NR C4-type zinc fingers follow at residues 38 to 58 (CRVCGDKANGYHFNVMTCEGC) and 74 to 99 (CPFRKGTCEITRKTRRQCQACRLRKC). The segment at residues 38–104 (CRVCGDKANG…RLRKCLESGM (67 aa)) is a DNA-binding region (nuclear receptor). The short motif at 63–89 (RRAMKRNVRLRCPFRKGTCEITRKTRR) is the Bipartite nuclear localization signal element. A hinge region spans residues 105–142 (KKEMIMSDAAVEQRRALIKRKKREKIEAPPPGGQGLTE). One can recognise an NR LBD domain in the interval 143–430 (EQQALIQELM…LMQELFSSTD (288 aa)). Hyperforin-binding positions include S244 and 282-285 (ILRF).

Belongs to the nuclear hormone receptor family. NR1 subfamily. As to quaternary structure, heterodimer with RXRA. Interacts with NCOA1. Interacts (via domain NR LBD) with CRY1 and CRY2 in a ligand-dependent manner.

It is found in the nucleus. Nuclear receptor that binds and is activated by a variety of endogenous and xenobiotic compounds. Transcription factor that activates the transcription of multiple genes involved in the metabolism and secretion of potentially harmful xenobiotics, endogenous compounds and drugs. Response to specific ligands is species-specific, due to differences in the ligand-binding domain. Activated by naturally occurring steroids, such as pregnenolone and progesterone. Binds to a response element in the promoters of the CYP3A4 and ABCB1/MDR1 genes. The polypeptide is Nuclear receptor subfamily 1 group I member 2 (Nr1i2) (Rattus norvegicus (Rat)).